The primary structure comprises 579 residues: Threonylcarbamoyladenosine tRNA methylthiotransferase (579 aa).

S53 carries the post-translational modification Phosphoserine. An MTTase N-terminal domain is found at 64–172; sequence QKIWIRTWGC…VVEVVEETIK (109 aa). Positions 73 and 109 each coordinate [4Fe-4S] cluster. The residue at position 122 (S122) is a Phosphoserine. 4 residues coordinate [4Fe-4S] cluster: C138, C214, C218, and C221. The Radical SAM core domain occupies 200-431; the sequence is RKNPLIEIIS…RVFHSYSPYD (232 aa). Residues 431–493 form the TRAM domain; the sequence is DHKIGERQQV…KHFMKGQPVS (63 aa). Residue T499 is modified to Phosphothreonine. The chain crosses the membrane as a helical span at residues 556 to 578; that stretch reads CALRMSVGLALLGLLFAFFVKVY.

Belongs to the methylthiotransferase family. CDKAL1 subfamily. Requires [4Fe-4S] cluster as cofactor. In terms of tissue distribution, expressed in pancreatic islets.

The protein resides in the endoplasmic reticulum membrane. It catalyses the reaction N(6)-L-threonylcarbamoyladenosine(37) in tRNA + (sulfur carrier)-SH + AH2 + 2 S-adenosyl-L-methionine = 2-methylsulfanyl-N(6)-L-threonylcarbamoyladenosine(37) in tRNA + (sulfur carrier)-H + 5'-deoxyadenosine + L-methionine + A + S-adenosyl-L-homocysteine + 2 H(+). Its function is as follows. Catalyzes the methylthiolation of N6-threonylcarbamoyladenosine (t(6)A), leading to the formation of 2-methylthio-N6-threonylcarbamoyladenosine (ms(2)t(6)A) at position 37 in tRNAs that read codons beginning with adenine. The chain is Threonylcarbamoyladenosine tRNA methylthiotransferase (CDKAL1) from Homo sapiens (Human).